Consider the following 448-residue polypeptide: Protein TraN (448 aa).

2 disordered regions span residues 243–273 and 411–448; these read NRVGASRTATTARAGQQQSPAVKQSSGNSGE and EAARRHQALMRKQEQEKKQAQERERGRSQSLGLSNKPS. Residues 246–261 show a composition bias toward low complexity; that stretch reads GASRTATTARAGQQQS. Residues 262–271 are compositionally biased toward polar residues; sequence PAVKQSSGNS. Residues 421–437 show a composition bias toward basic and acidic residues; that stretch reads RKQEQEKKQAQERERGR. Residues 438–448 are compositionally biased toward polar residues; sequence SQSLGLSNKPS.

This sequence to H.influenzae HI_1407.

The chain is Protein TraN (traN) from Escherichia coli.